The chain runs to 94 residues: Defensin alpha 5 (94 aa).

The first 19 residues, 1-19 (MRTIAILAAILLVALQAQA), serve as a signal peptide directing secretion. 3 cysteine pairs are disulfide-bonded: Cys65–Cys93, Cys67–Cys82, and Cys72–Cys92.

It belongs to the alpha-defensin family. As to quaternary structure, homodimer. Homotetramer. Interacts with B.antracis lef/lethal factor. Post-translationally, glycosylated. In terms of processing, proteolytically cleaved at Arg-62 by trypsin. Both the propeptide form proHD5/HD5(20-94) and HD5(56-94) are cleaved into the lumenal peptide form HD5(63-94) by trypsin. Unprocessed proHD5 exerts antimicrobial activities, but peptide potency is enhanced by peptide processing. Proteolytically cleaved in duodenal fluid; derived fragments are antimicrobially active against commensal bacteria (in vitro). (Microbial infection) The disulfide bridges and homodimerization are a prerequisite for the enhancement of S.flexneri adhesion and invasion. As to expression, expressed in the gastrointestinal, reproductive, and urinary tracts (at protein level). Expressed in Paneth cells of the small intestine (at protein level). Expressed throughout the urothelium of the lower urinary tract and in the collecting tubules of the kidney (at protein level). Expressed in stratified squamous epithelial cells of the female genital tract epithelia, such as in vagina, ectocervix, endocervix, endometrium, and fallopian tube (at protein level). Endometrial expression correlates with stages of the menstrual cycle: Expression is low during the early proliferative phase, increased during the mid- to late proliferative phase, peaks during the early secretory phase of the cycle, and decreases during the mid- to late secretory phase.

The protein localises to the secreted. It localises to the cytoplasmic vesicle. It is found in the secretory vesicle. Host-defense peptide that maintains sterility in the urogenital system. Has antimicrobial activity against a wide range of bacteria, including Gram-negative E.coli, P.aeruginosa and S.typhimurium, and Gram-positive E.aerogenes, S.aureus, B.cereus, E.faecium and L.monocytogenes. Confers resistance to intestinal infection by S.typhimurium. Exhibits antimicrobial activity against enteric commensal bacteria such as B.adolescentis, L.acidophilus, B.breve, L.fermentum, B.longum and S.thermophilus. Binds to bacterial membranes and causes membrane disintegration. Induces the secretion of the chemokine IL-8 by intestinal epithelial cells. Binds to B.antracis lef/lethal factor, a major virulence factor from B.anthracis, and neutralizes its enzymatic activity. In terms of biological role, (Microbial infection) Acts as a target for S.flexneri infection by binding to the bacterium, possibly via bacterial surface proteins, and thereby augmenting infectivity via enhanced bacterial adhesion and invasion of epithelial cells and tissues. The sequence is that of Defensin alpha 5 (DEFA5) from Homo sapiens (Human).